The primary structure comprises 346 residues: Phosphoribosylformylglycinamidine cyclo-ligase (346 aa).

It belongs to the AIR synthase family.

The protein resides in the cytoplasm. The catalysed reaction is 2-formamido-N(1)-(5-O-phospho-beta-D-ribosyl)acetamidine + ATP = 5-amino-1-(5-phospho-beta-D-ribosyl)imidazole + ADP + phosphate + H(+). It functions in the pathway purine metabolism; IMP biosynthesis via de novo pathway; 5-amino-1-(5-phospho-D-ribosyl)imidazole from N(2)-formyl-N(1)-(5-phospho-D-ribosyl)glycinamide: step 2/2. The chain is Phosphoribosylformylglycinamidine cyclo-ligase from Colwellia psychrerythraea (strain 34H / ATCC BAA-681) (Vibrio psychroerythus).